Here is a 238-residue protein sequence, read N- to C-terminus: Flagellar L-ring protein (238 aa).

The signal sequence occupies residues 1-16 (MRKLILISLCIFFLAS). Cysteine 17 is lipidated: N-palmitoyl cysteine. Residue cysteine 17 is the site of S-diacylglycerol cysteine attachment.

The protein belongs to the FlgH family. The basal body constitutes a major portion of the flagellar organelle and consists of four rings (L,P,S, and M) mounted on a central rod.

The protein resides in the cell outer membrane. It localises to the bacterial flagellum basal body. Its function is as follows. Assembles around the rod to form the L-ring and probably protects the motor/basal body from shearing forces during rotation. This Thermodesulfovibrio yellowstonii (strain ATCC 51303 / DSM 11347 / YP87) protein is Flagellar L-ring protein.